A 135-amino-acid polypeptide reads, in one-letter code: Small ribosomal subunit protein uS11 (135 aa).

Belongs to the universal ribosomal protein uS11 family. Part of the 30S ribosomal subunit. Interacts with proteins S7 and S18. Binds to IF-3.

Located on the platform of the 30S subunit, it bridges several disparate RNA helices of the 16S rRNA. Forms part of the Shine-Dalgarno cleft in the 70S ribosome. The protein is Small ribosomal subunit protein uS11 of Solibacter usitatus (strain Ellin6076).